Consider the following 405-residue polypeptide: Na(+)-translocating NADH-quinone reductase subunit F (405 aa).

A helical transmembrane segment spans residues 3–23; that stretch reads IILGIVMFTVIVLALALMILF. A 2Fe-2S ferredoxin-type domain is found at 32-124; sequence GDITIKVNDE…DMDIEVPEEV (93 aa). Residues cysteine 67, cysteine 73, cysteine 76, and cysteine 108 each contribute to the [2Fe-2S] cluster site. One can recognise an FAD-binding FR-type domain in the interval 127 to 267; sequence VKKWECTVIS…SGPFGEFFAK (141 aa).

The protein belongs to the NqrF family. In terms of assembly, composed of six subunits; NqrA, NqrB, NqrC, NqrD, NqrE and NqrF. The cofactor is [2Fe-2S] cluster. FAD serves as cofactor.

It is found in the cell inner membrane. It catalyses the reaction a ubiquinone + n Na(+)(in) + NADH + H(+) = a ubiquinol + n Na(+)(out) + NAD(+). In terms of biological role, NQR complex catalyzes the reduction of ubiquinone-1 to ubiquinol by two successive reactions, coupled with the transport of Na(+) ions from the cytoplasm to the periplasm. The first step is catalyzed by NqrF, which accepts electrons from NADH and reduces ubiquinone-1 to ubisemiquinone by a one-electron transfer pathway. The polypeptide is Na(+)-translocating NADH-quinone reductase subunit F (Neisseria gonorrhoeae (strain ATCC 700825 / FA 1090)).